We begin with the raw amino-acid sequence, 54 residues long: Large ribosomal subunit protein bL32c (54 aa).

This sequence belongs to the bacterial ribosomal protein bL32 family.

It is found in the plastid. The protein resides in the chloroplast. This Piper cenocladum (Ant piper) protein is Large ribosomal subunit protein bL32c.